A 577-amino-acid chain; its full sequence is 2-hydroxyacyl-CoA lyase (577 aa).

Glu59 provides a ligand contact to thiamine diphosphate. A thiamine pyrophosphate binding region spans residues 412–493; it reads TMDVGRAVLV…VIVFNNNGVY (82 aa). Residues Asp462 and Asn489 each contribute to the Mg(2+) site.

The protein belongs to the TPP enzyme family. Homotetramer. Requires Mg(2+) as cofactor. It depends on thiamine diphosphate as a cofactor.

The enzyme catalyses an (R)-2-hydroxy-long-chain-fatty acyl-CoA = a long-chain fatty aldehyde + formyl-CoA. The catalysed reaction is a 2-hydroxy-3-methyl fatty acyl-CoA = a 2-methyl-branched fatty aldehyde + formyl-CoA. Its function is as follows. Catalyzes a carbon-carbon cleavage reaction; cleaves a 2-hydroxy-3-methylacyl-CoA into formyl-CoA and a 2-methyl-branched fatty aldehyde. The protein is 2-hydroxyacyl-CoA lyase of Oryza sativa subsp. japonica (Rice).